The sequence spans 1258 residues: Ice nucleation protein (1258 aa).

Residues 162–1217 (ATYGSTLSGT…LTAGENSVLI (1056 aa)) are octapeptide periodicity. 5 disordered regions span residues 260–287 (YGSTQTAGEDSSLTAGYGSTQTAQKGSD), 311–342 (TQTAGEESTQTAGYGSTQTAQKGSDLTAGYGS), 356–383 (YGSTQTAGEDSSLTAGYGSTQTAQKGSD), 407–438 (TQTAGEESTQTAGYGSTQTAQKGSDLTAGYGS), and 452–480 (YGSTQTAGEDSSLTAGYGSTQTAQKGSDL). 5 stretches are compositionally biased toward polar residues: residues 261–286 (GSTQTAGEDSSLTAGYGSTQTAQKGS), 311–334 (TQTAGEESTQTAGYGSTQTAQKGS), 357–382 (GSTQTAGEDSSLTAGYGSTQTAQKGS), 407–430 (TQTAGEESTQTAGYGSTQTAQKGS), and 453–480 (GSTQTAGEDSSLTAGYGSTQTAQKGSDL).

This sequence belongs to the bacterial ice nucleation protein family.

Its subcellular location is the cell outer membrane. Its function is as follows. Ice nucleation proteins enable bacteria to nucleate crystallization in supercooled water. This Enterobacter agglomerans (Erwinia herbicola) protein is Ice nucleation protein (iceE).